The following is a 427-amino-acid chain: Ribosomal protein uS12 methylthiotransferase RimO (427 aa).

The MTTase N-terminal domain occupies Met1–Ile116. Residues Cys10, Cys46, Cys79, Cys145, Cys149, and Cys152 each contribute to the [4Fe-4S] cluster site. The 230-residue stretch at Val131–Glu360 folds into the Radical SAM core domain. The region spanning Glu363–Glu426 is the TRAM domain.

Belongs to the methylthiotransferase family. RimO subfamily. Requires [4Fe-4S] cluster as cofactor.

It localises to the cytoplasm. The catalysed reaction is L-aspartate(89)-[ribosomal protein uS12]-hydrogen + (sulfur carrier)-SH + AH2 + 2 S-adenosyl-L-methionine = 3-methylsulfanyl-L-aspartate(89)-[ribosomal protein uS12]-hydrogen + (sulfur carrier)-H + 5'-deoxyadenosine + L-methionine + A + S-adenosyl-L-homocysteine + 2 H(+). Catalyzes the methylthiolation of an aspartic acid residue of ribosomal protein uS12. This Thermosipho africanus (strain TCF52B) protein is Ribosomal protein uS12 methylthiotransferase RimO.